A 56-amino-acid polypeptide reads, in one-letter code: Large ribosomal subunit protein bL33 (56 aa).

The protein belongs to the bacterial ribosomal protein bL33 family.

The polypeptide is Large ribosomal subunit protein bL33 (Acidovorax sp. (strain JS42)).